Here is a 100-residue protein sequence, read N- to C-terminus: Vesicle-associated membrane protein 8 (100 aa).

Residues 1–74 (MEASGSAGND…ARKFWWKNVK (74 aa)) are Cytoplasmic-facing. S4 and S17 each carry phosphoserine. The v-SNARE coiled-coil homology domain occupies 11–71 (RVRNLQSEVE…QKVARKFWWK (61 aa)). Phosphothreonine occurs at positions 27, 47, and 53. Residue S54 is modified to Phosphoserine. Residues 75-95 (MIVIICVIVLIILILIILFAT) traverse the membrane as a helical; Anchor for type IV membrane protein segment. The Vesicular segment spans residues 96-100 (GTIPT).

The protein belongs to the synaptobrevin family. Forms a SNARE complex composed of VAMP8, SNAP29 and STX17 involved in fusion of autophagosome with lysosome. Found in a number of SNARE complexes with NAPA, SNAP23, SNAP25, STX1A, STX4, STX7, STX8 and VTI1B. Interacts with PICALM. SNARE complex formation and binding by PICALM are mutually exclusive processes for VAMP8. Interacts with SBF2/MTMR13. Interacts with RAB21 (in GTP-bound form) in response to starvation; the interaction probably regulates VAMP8 endolysosomal trafficking. Interacts with STX17; this interaction is increased in the absence of TMEM39A. Interacts with TRIM6. In terms of tissue distribution, expressed (at protein level) at a high level in kidney, lung and spleen; at a lower level in testis, liver, brain and heart. Expressed in kidney and retinal pigment epithelium derived cell line.

Its subcellular location is the lysosome membrane. It localises to the late endosome membrane. The protein resides in the early endosome membrane. The protein localises to the midbody. It is found in the cell membrane. Its subcellular location is the zymogen granule membrane. Its function is as follows. SNAREs, soluble N-ethylmaleimide-sensitive factor-attachment protein receptors, are essential proteins for fusion of cellular membranes. SNAREs localized on opposing membranes assemble to form a trans-SNARE complex, an extended, parallel four alpha-helical bundle that drives membrane fusion. VAMP8 is a SNARE involved in autophagy through the direct control of autophagosome membrane fusion with the lysososome membrane via its interaction with the STX17-SNAP29 binary t-SNARE complex. Also required for dense-granule secretion in platelets. Also plays a role in regulated enzyme secretion in pancreatic acinar cells. Involved in the abscission of the midbody during cell division, which leads to completely separate daughter cells. Involved in the homotypic fusion of early and late endosomes. Also participates in the activation of type I interferon antiviral response through a TRIM6-dependent mechanism. The chain is Vesicle-associated membrane protein 8 from Rattus norvegicus (Rat).